A 437-amino-acid polypeptide reads, in one-letter code: MRQWTAIHLAKLARKASRAVGKRGTDLPGQIARKVDTDVLRKLAEQVDDIVFISGTNGKTTTSNLIGHTLKANNIQIIHNNEGANMAAGITSAFIMQSTPKTKIAVIEIDEGSIPRVLKEVTPSMMVFTNFFRDQMDRFGEIDIMVNNIAETISNKGIKLLLNADDPFVSRLKIASDTIVYYGMKAHAHEFEQSTMNESRYCPNCGRLLQYDYIHYNQIGHYHCQCGFKREQAKYEISSFDVAPFLYLNINDEKYDMKIAGDFNAYNALAAYTVLRELGLNEQTIKNGFETYTSDNGRMQYFKKERKEAMINLAKNPAGMNASLSVGEQLEGEKVYVISLNDNAADGRDTSWIYDADFEKLSKQQIEAIIVTGTRAEELQLRLKLAEVEVPIIVERDIYKATAKTMDYKGFTVAIPNYTSLAPMLEQLNRSFEGGQS.

Residues cysteine 202, cysteine 205, cysteine 224, and cysteine 226 each coordinate Zn(2+). The active site involves aspartate 349.

The protein belongs to the MurCDEF family. MurT subfamily. In terms of assembly, forms a heterodimer with GatD.

The enzyme catalyses beta-D-GlcNAc-(1-&gt;4)-Mur2Ac(oyl-L-Ala-gamma-D-Glu-L-Lys-D-Ala-D-Ala)-di-trans,octa-cis-undecaprenyl diphosphate + L-glutamine + ATP + H2O = beta-D-GlcNAc-(1-&gt;4)-Mur2Ac(oyl-L-Ala-D-isoglutaminyl-L-Lys-D-Ala-D-Ala)-di-trans,octa-cis-undecaprenyl diphosphate + L-glutamate + ADP + phosphate + H(+). The catalysed reaction is beta-D-GlcNAc-(1-&gt;4)-Mur2Ac(oyl-L-Ala-gamma-D-Glu-L-Lys-D-Ala-D-Ala)-di-trans,octa-cis-undecaprenyl diphosphate + ATP = beta-D-GlcNAc-(1-&gt;4)-Mur2Ac(oyl-L-Ala-gamma-D-O-P-Glu-L-Lys-D-Ala-D-Ala)-di-trans,octa-cis-undecaprenyl diphosphate + ADP. It carries out the reaction beta-D-GlcNAc-(1-&gt;4)-Mur2Ac(oyl-L-Ala-gamma-D-O-P-Glu-L-Lys-D-Ala-D-Ala)-di-trans,octa-cis-undecaprenyl diphosphate + NH4(+) = beta-D-GlcNAc-(1-&gt;4)-Mur2Ac(oyl-L-Ala-D-isoglutaminyl-L-Lys-D-Ala-D-Ala)-di-trans,octa-cis-undecaprenyl diphosphate + phosphate + H(+). It participates in cell wall biogenesis; peptidoglycan biosynthesis. Its function is as follows. The lipid II isoglutaminyl synthase complex catalyzes the formation of alpha-D-isoglutamine in the cell wall lipid II stem peptide. The MurT subunit catalyzes the ATP-dependent amidation of D-glutamate residue of lipid II, converting it to an isoglutamine residue. The sequence is that of Lipid II isoglutaminyl synthase (glutamine-hydrolyzing) subunit MurT from Staphylococcus aureus (strain N315).